The following is a 104-amino-acid chain: Putative zinc finger protein ORF104b (104 aa).

The segment at 62–85 adopts a C2H2-type zinc-finger fold; sequence YECKYCHTRYLSHTGIVYHLEREH.

The polypeptide is Putative zinc finger protein ORF104b (Acidianus sp. F28 (AFV-2)).